We begin with the raw amino-acid sequence, 453 residues long: Protein IVY1 (453 aa).

The span at 1–16 (MPDNNTEQLQGSPSSD) shows a compositional bias: polar residues. A disordered region spans residues 1-20 (MPDNNTEQLQGSPSSDQRLR). Residues serine 59, serine 84, and serine 85 each carry the phosphoserine modification. 2 coiled-coil regions span residues 102 to 122 (KRDVKETQEALSTLLRNSNAY) and 230 to 257 (IRNLISYRESLSSLQARLDQLETLKHDF). Disordered stretches follow at residues 316–340 (DGPYGTIGGDGETAGEAYNSDEETG) and 353–453 (TSQP…SSNI). Serine 335 carries the post-translational modification Phosphoserine. Residues 353–371 (TSQPSTSKTSLPKSKGSST) are compositionally biased toward low complexity. 2 stretches are compositionally biased toward polar residues: residues 372-384 (VSTPNHSQSSSNK) and 404-429 (LMGTENSFSLPPTRNSAEETTQTFKQ). Positions 431–442 (SIKEDNDNHSSD) are enriched in basic and acidic residues. A compositionally biased stretch (polar residues) spans 443 to 453 (TDGMQDQSSNI).

Homomultimer. Interacts with YPT7 and VPS33.

The protein localises to the vacuole membrane. In terms of biological role, may be required for vacuolar fusion. Overexpression leads to fragmentation of vacuoles, missorting of the vacuolar enzyme carboxypeptidase Y (CPY) to the exterior of the cell and accumulation of multivesicular bodies inside the cell. The protein is Protein IVY1 (IVY1) of Saccharomyces cerevisiae (strain ATCC 204508 / S288c) (Baker's yeast).